Consider the following 1142-residue polypeptide: Coiled-coil domain-containing protein 40 (1142 aa).

Disordered regions lie at residues 1-197 (MAEP…QVLP) and 251-274 (PSTE…AEDE). Basic and acidic residues-rich tracts occupy residues 11–27 (SHPE…EGNN) and 35–55 (PEKD…HPEE). Over residues 63-96 (AIEEGEVETEGEAAVEGEEEAVSYGDAESEEEYY) the composition is skewed to acidic residues. The residue at position 252 (Ser-252) is a Phosphoserine. Residues 265–274 (EGSDEEAEDE) are compositionally biased toward acidic residues. 5 coiled-coil regions span residues 293–319 (AALK…ATKQ), 349–470 (HDRH…QAED), 526–627 (QAKS…LRRK), 684–950 (TSSR…LGQL), and 1005–1054 (VRKA…LTRL).

This sequence belongs to the CCDC40 family.

It is found in the cytoplasm. The protein resides in the cell projection. Its subcellular location is the cilium. Functionally, required for assembly of dynein regulatory complex (DRC) and inner dynein arm (IDA) complexes, which are responsible for ciliary beat regulation, thereby playing a central role in motility in cilia and flagella. Probably acts together with CCDC39 to form a molecular ruler that determines the 96 nanometer (nm) repeat length and arrangements of components in cilia and flagella. Not required for outer dynein arm complexes assembly. Required for axonemal recruitment of CCDC39. The protein is Coiled-coil domain-containing protein 40 of Homo sapiens (Human).